The primary structure comprises 248 residues: Ubiquinone biosynthesis O-methyltransferase (248 aa).

The S-adenosyl-L-methionine site is built by arginine 40, glycine 71, aspartate 92, and methionine 135.

It belongs to the methyltransferase superfamily. UbiG/COQ3 family.

It catalyses the reaction a 3-demethylubiquinol + S-adenosyl-L-methionine = a ubiquinol + S-adenosyl-L-homocysteine + H(+). The enzyme catalyses a 3-(all-trans-polyprenyl)benzene-1,2-diol + S-adenosyl-L-methionine = a 2-methoxy-6-(all-trans-polyprenyl)phenol + S-adenosyl-L-homocysteine + H(+). The protein operates within cofactor biosynthesis; ubiquinone biosynthesis. O-methyltransferase that catalyzes the 2 O-methylation steps in the ubiquinone biosynthetic pathway. The chain is Ubiquinone biosynthesis O-methyltransferase from Dinoroseobacter shibae (strain DSM 16493 / NCIMB 14021 / DFL 12).